The chain runs to 642 residues: Serine/threonine-protein kinase pakA (642 aa).

Composition is skewed to polar residues over residues 1–12 and 38–48; these read MSLKKQQQQSDF and LRQSASFTALN. Positions 1 to 82 are disordered; that stretch reads MSLKKQQQQS…GFGTKPRRKN (82 aa). A CRIB domain is found at 100-113; the sequence is ISAPENPVHVTHVG. Disordered stretches follow at residues 180–276 and 317–338; these read GEYP…PIPE and QLDRSRSQPAAAVARPRPRTRQ. Composition is skewed to low complexity over residues 217 to 227 and 254 to 266; these read SQSSPVPVLSS and VVSNRAPAARPAN. A Protein kinase domain is found at 361–612; it reads YYNLNKIGQG…AHDLLKHPFM (252 aa). Residues 367–375 and Lys-390 each bind ATP; that span reads IGQGASGGV. Asp-480 serves as the catalytic Proton acceptor.

It belongs to the protein kinase superfamily. STE Ser/Thr protein kinase family. STE20 subfamily.

It is found in the cytoplasm. The protein resides in the nucleus. The enzyme catalyses L-seryl-[protein] + ATP = O-phospho-L-seryl-[protein] + ADP + H(+). It catalyses the reaction L-threonyl-[protein] + ATP = O-phospho-L-threonyl-[protein] + ADP + H(+). Functionally, MAP4K component of the MAPK pathway required for the mating pheromone response and the regulation of cell polarity and cell cycle. The protein is Serine/threonine-protein kinase pakA (pakA) of Talaromyces marneffei (Penicillium marneffei).